Consider the following 447-residue polypeptide: Mannose/glucose-specific lectin (447 aa).

Tandem repeats lie at residues 1-149 (SLKG…VQPV), 150-295 (PHGT…VKPR), and 296-447 (DVEG…DTAV). Residues 1 to 447 (SLKGMISVGP…GIFVKPDTAV (447 aa)) form a 3 X approximate tandem repeats region. Jacalin-type lectin domains lie at 5–148 (MISV…FVQP), 153–294 (TISF…YVKP), and 300–443 (SISI…FVKP).

The protein belongs to the jacalin lectin family. As to quaternary structure, homodimer. The N-terminus is blocked.

Mannose/glucose specific lectin. Shows agglutinating activity against rabbit erythrocytes. This Parkia platycephala protein is Mannose/glucose-specific lectin.